Consider the following 44-residue polypeptide: Small, acid-soluble spore protein N (44 aa).

Residues 1–44 (MGNPKKNSKDFVPNHIGTQSKKAGGNKGKQMQDTTGKQPIVDNG) form a disordered region.

The protein belongs to the SspN family.

The protein localises to the spore core. The polypeptide is Small, acid-soluble spore protein N (Bacillus cytotoxicus (strain DSM 22905 / CIP 110041 / 391-98 / NVH 391-98)).